The following is a 358-amino-acid chain: UPF0421 protein BT9727_2513 (358 aa).

4 helical membrane passes run 19 to 39 (IAVFLTVLVCEFFNIPTIFAV), 74 to 94 (FTFFLGHQALSYALAAMFTIV), 109 to 129 (TLTAVAMIPITADHYFTAFLI), and 131 to 151 (LATTSTGIIVSTVVNFFILPP).

The protein belongs to the UPF0421 family.

It localises to the cell membrane. This Bacillus thuringiensis subsp. konkukian (strain 97-27) protein is UPF0421 protein BT9727_2513.